Consider the following 423-residue polypeptide: UDP-N-acetylglucosamine 1-carboxyvinyltransferase 2 (423 aa).

23–24 (KN) contributes to the phosphoenolpyruvate binding site. UDP-N-acetyl-alpha-D-glucosamine is bound at residue Arg-96. Catalysis depends on Cys-120, which acts as the Proton donor. 2-(S-cysteinyl)pyruvic acid O-phosphothioketal is present on Cys-120. UDP-N-acetyl-alpha-D-glucosamine-binding positions include 125 to 129 (RPIDL), Asp-309, and Val-331.

The protein belongs to the EPSP synthase family. MurA subfamily.

Its subcellular location is the cytoplasm. The catalysed reaction is phosphoenolpyruvate + UDP-N-acetyl-alpha-D-glucosamine = UDP-N-acetyl-3-O-(1-carboxyvinyl)-alpha-D-glucosamine + phosphate. It functions in the pathway cell wall biogenesis; peptidoglycan biosynthesis. Cell wall formation. Adds enolpyruvyl to UDP-N-acetylglucosamine. The chain is UDP-N-acetylglucosamine 1-carboxyvinyltransferase 2 from Streptococcus agalactiae serotype Ia (strain ATCC 27591 / A909 / CDC SS700).